A 540-amino-acid polypeptide reads, in one-letter code: uncharacterized protein (540 aa).

This is an uncharacterized protein from Escherichia coli (strain K12).